We begin with the raw amino-acid sequence, 361 residues long: Phospho-N-acetylmuramoyl-pentapeptide-transferase (361 aa).

Helical transmembrane passes span 25 to 45, 72 to 92, 95 to 115, 135 to 155, 169 to 189, 200 to 220, 240 to 260, 264 to 284, 289 to 309, and 338 to 358; these read TGGA…WIID, TPTM…VLWA, LNPY…VGFY, LLIE…LGRA, VMLN…VGAG, GLAI…SYLA, LAVL…FNAP, IFMG…IAVA, IVLA…IVQV, and QIVI…LSTL.

It belongs to the glycosyltransferase 4 family. MraY subfamily. The cofactor is Mg(2+).

It localises to the cell inner membrane. It catalyses the reaction UDP-N-acetyl-alpha-D-muramoyl-L-alanyl-gamma-D-glutamyl-meso-2,6-diaminopimeloyl-D-alanyl-D-alanine + di-trans,octa-cis-undecaprenyl phosphate = di-trans,octa-cis-undecaprenyl diphospho-N-acetyl-alpha-D-muramoyl-L-alanyl-D-glutamyl-meso-2,6-diaminopimeloyl-D-alanyl-D-alanine + UMP. The protein operates within cell wall biogenesis; peptidoglycan biosynthesis. Functionally, catalyzes the initial step of the lipid cycle reactions in the biosynthesis of the cell wall peptidoglycan: transfers peptidoglycan precursor phospho-MurNAc-pentapeptide from UDP-MurNAc-pentapeptide onto the lipid carrier undecaprenyl phosphate, yielding undecaprenyl-pyrophosphoryl-MurNAc-pentapeptide, known as lipid I. This is Phospho-N-acetylmuramoyl-pentapeptide-transferase from Rhodopseudomonas palustris (strain TIE-1).